Consider the following 443-residue polypeptide: 3-isopropylmalate dehydratase large subunit (443 aa).

Residues Cys347, Cys407, and Cys410 each coordinate [4Fe-4S] cluster.

It belongs to the aconitase/IPM isomerase family. LeuC type 1 subfamily. As to quaternary structure, heterodimer of LeuC and LeuD. [4Fe-4S] cluster is required as a cofactor.

It catalyses the reaction (2R,3S)-3-isopropylmalate = (2S)-2-isopropylmalate. It participates in amino-acid biosynthesis; L-leucine biosynthesis; L-leucine from 3-methyl-2-oxobutanoate: step 2/4. Catalyzes the isomerization between 2-isopropylmalate and 3-isopropylmalate, via the formation of 2-isopropylmaleate. The polypeptide is 3-isopropylmalate dehydratase large subunit (Buchnera aphidicola subsp. Uroleucon obscurum).